Consider the following 91-residue polypeptide: Small ribosomal subunit protein uS19 (91 aa).

Belongs to the universal ribosomal protein uS19 family.

In terms of biological role, protein S19 forms a complex with S13 that binds strongly to the 16S ribosomal RNA. The sequence is that of Small ribosomal subunit protein uS19 from Synechococcus elongatus (strain ATCC 33912 / PCC 7942 / FACHB-805) (Anacystis nidulans R2).